The chain runs to 247 residues: 5'-nucleotidase SurE (247 aa).

A divalent metal cation is bound by residues Asp-8, Asp-9, Ser-39, and Asn-91.

The protein belongs to the SurE nucleotidase family. A divalent metal cation serves as cofactor.

It is found in the cytoplasm. The catalysed reaction is a ribonucleoside 5'-phosphate + H2O = a ribonucleoside + phosphate. Its function is as follows. Nucleotidase that shows phosphatase activity on nucleoside 5'-monophosphates. This chain is 5'-nucleotidase SurE, found in Azoarcus sp. (strain BH72).